Here is a 710-residue protein sequence, read N- to C-terminus: Chaperonin-containing T-complex member BBS12 (710 aa).

This sequence belongs to the TCP-1 chaperonin family. BBS12 subfamily. In terms of assembly, component of the chaperonin-containing T-complex (TRiC), a heterooligomeric complex of about 850 to 900 kDa that forms two stacked rings, 12 to 16 nm in diameter. Interacts with MKKS.

It localises to the cell projection. The protein localises to the cilium. Component of the chaperonin-containing T-complex (TRiC), a molecular chaperone complex that assists the folding of proteins upon ATP hydrolysis. As part of the TRiC complex may play a role in the assembly of BBSome, a complex involved in ciliogenesis regulating transports vesicles to the cilia. Involved in adipogenic differentiation. The polypeptide is Chaperonin-containing T-complex member BBS12 (BBS12) (Homo sapiens (Human)).